Reading from the N-terminus, the 1183-residue chain is MAGQVVQYGRHRKRRNYARISEVLELPNLIEIQTKSYEWFLREGLIEMFRDISPIEDFTGNLSLEFVDYRLGEPKYDLEESKNRDATYAAPLRVKVRLIIKETGEVKEQEVFMGDFPLMTDTGTFVINGAERVIVSQLVRSPSVYFNEKIDKNGRENYDATIIPNRGAWLEYETDAKDVVYVRIDRTRKLPLTVLLRALGFSSDQEIVDLLGDNEYLRNTLEKDGTENTEQALLEIYERLRPGEPPTVENAKSLLYSRFFDPKRYDLASVGRYKTNKKLHLKHRLFNQKLAEPIVNTETGEIVVEEGTVLDRRKIDEIMDVLESNANSEVFELHGSVIDEPVEIQSIKVYVPNDDEGRTTTVIGNAFPDSEVKCITPADIIASMSYFFNLLSGIGYTDDIDHLGNRRLRSVGELLQNQFRIGLSRMERVVRERMSIQDTESITPQQLINIRPVIASIKEFFGSSQLSQFMDQANPLAELTHKRRLSALGPGGLTRERAQMEVRDVHYSHYGRMCPIETPEGPNIGLINSLSSYARVNEFGFIETPYRKVDLDTHAITDQIDYLTADEEDSYVVAQANSKLDENGRFMDDEVVCRFRGNNTVMAKEKMDYMDVSPKQVVSAATACIPFLENDDSNRALMGANMQRQAVPLMNPEAPFVGTGMEHVAARDSGAAITAKHRGRVEHVESNEILVRRLVEENGVEHEGELDRYPLAKFKRSNSGTCYNQRPIVAVGDVVEFNEILADGPSMELGEMALGRNVVVGFMTWDGYNYEDAVIMSERLVKDDVYTSIHIEEYESEARDTKLGPEEITRDIPNVSESALKNLDDRGIVYIGAEVKDGDILVGKVTPKGVTELTAEERLLHAIFGEKAREVRDTSLRVPHGAGGIVLDVKVFNREEGDDTLSPGVNQLVRVYIVQKRKIHVGDKMCGRHGNKGVISKIVPEEDMPYLPDGRPIDIMLNPLGVPSRMNIGQVLELHLGMAAKNLGIHVASPVFDGANDDDVWSTIEEAGMARDGKTVLYDGRTGEPFDNRISVGVMYMLKLAHMVDDKLHARSTGPYSLVTQQPLGGKAQFGGQRFGEMEVWALEAYGAAYTLQEILTYKSDDTVGRVKTYEAIVKGENISRPSVPESFRVLMKELQSLGLDVKVMDEQDNEIEMTDVDDDDVVERKVDLQQNDAPETQKEVTD.

It belongs to the RNA polymerase beta chain family. As to quaternary structure, the RNAP catalytic core consists of 2 alpha, 1 beta, 1 beta' and 1 omega subunit. When a sigma factor is associated with the core the holoenzyme is formed, which can initiate transcription.

It catalyses the reaction RNA(n) + a ribonucleoside 5'-triphosphate = RNA(n+1) + diphosphate. Functionally, DNA-dependent RNA polymerase catalyzes the transcription of DNA into RNA using the four ribonucleoside triphosphates as substrates. In Staphylococcus aureus (strain MRSA252), this protein is DNA-directed RNA polymerase subunit beta.